The following is a 210-amino-acid chain: HTH-type transcriptional regulator TtgR (210 aa).

In terms of domain architecture, HTH tetR-type spans 10–70 (QETRAQIIEA…ALLDSLHETH (61 aa)). A DNA-binding region (H-T-H motif) is located at residues 33–52 (TLADIAELAGVTRGAIYWHF).

In terms of assembly, homodimer.

In terms of biological role, represses expression from the ttgABC operon promoter and its own expression. Binds to a promoter region between the divergently transcribed ttgR and ttgABC genes/operons; in the presence of chloramphenicol or tetracycline this binding no longer occurs and ttgR and ttgABC are derepressed. This suggests that TtgR binds these antibiotics. This is HTH-type transcriptional regulator TtgR (ttgR) from Pseudomonas putida (strain DOT-T1E).